A 185-amino-acid polypeptide reads, in one-letter code: Ribosome-recycling factor (185 aa).

The protein belongs to the RRF family.

It is found in the cytoplasm. Responsible for the release of ribosomes from messenger RNA at the termination of protein biosynthesis. May increase the efficiency of translation by recycling ribosomes from one round of translation to another. This Corynebacterium glutamicum (strain R) protein is Ribosome-recycling factor.